Consider the following 102-residue polypeptide: Large ribosomal subunit protein uL24 (102 aa).

Belongs to the universal ribosomal protein uL24 family. Part of the 50S ribosomal subunit.

Its function is as follows. One of two assembly initiator proteins, it binds directly to the 5'-end of the 23S rRNA, where it nucleates assembly of the 50S subunit. Functionally, one of the proteins that surrounds the polypeptide exit tunnel on the outside of the subunit. In Rhizobium etli (strain CIAT 652), this protein is Large ribosomal subunit protein uL24.